The following is a 285-amino-acid chain: Acetyl-coenzyme A carboxylase carboxyl transferase subunit beta (285 aa).

Positions 24-285 (GLWYKSPTGK…DLIQNQPVRA (262 aa)) constitute a CoA carboxyltransferase N-terminal domain.

It belongs to the AccD/PCCB family. In terms of assembly, acetyl-CoA carboxylase is a heterohexamer composed of biotin carboxyl carrier protein (AccB), biotin carboxylase (AccC) and two subunits each of ACCase subunit alpha (AccA) and ACCase subunit beta (AccD).

Its subcellular location is the cytoplasm. It carries out the reaction N(6)-carboxybiotinyl-L-lysyl-[protein] + acetyl-CoA = N(6)-biotinyl-L-lysyl-[protein] + malonyl-CoA. Its pathway is lipid metabolism; malonyl-CoA biosynthesis; malonyl-CoA from acetyl-CoA: step 1/1. Its function is as follows. Component of the acetyl coenzyme A carboxylase (ACC) complex. Biotin carboxylase (BC) catalyzes the carboxylation of biotin on its carrier protein (BCCP) and then the CO(2) group is transferred by the transcarboxylase to acetyl-CoA to form malonyl-CoA. The polypeptide is Acetyl-coenzyme A carboxylase carboxyl transferase subunit beta (Christiangramia forsetii (strain DSM 17595 / CGMCC 1.15422 / KT0803) (Gramella forsetii)).